Reading from the N-terminus, the 95-residue chain is Co-chaperonin GroES (95 aa).

Belongs to the GroES chaperonin family. In terms of assembly, heptamer of 7 subunits arranged in a ring. Interacts with the chaperonin GroEL.

The protein resides in the cytoplasm. Together with the chaperonin GroEL, plays an essential role in assisting protein folding. The GroEL-GroES system forms a nano-cage that allows encapsulation of the non-native substrate proteins and provides a physical environment optimized to promote and accelerate protein folding. GroES binds to the apical surface of the GroEL ring, thereby capping the opening of the GroEL channel. The protein is Co-chaperonin GroES of Beijerinckia indica subsp. indica (strain ATCC 9039 / DSM 1715 / NCIMB 8712).